The following is a 317-amino-acid chain: Acetyl-coenzyme A carboxylase carboxyl transferase subunit alpha (317 aa).

Positions 39 to 293 (RLKKKSISLT…KTSLAQGVAE (255 aa)) constitute a CoA carboxyltransferase C-terminal domain.

Belongs to the AccA family. As to quaternary structure, acetyl-CoA carboxylase is a heterohexamer composed of biotin carboxyl carrier protein (AccB), biotin carboxylase (AccC) and two subunits each of ACCase subunit alpha (AccA) and ACCase subunit beta (AccD).

The protein localises to the cytoplasm. The enzyme catalyses N(6)-carboxybiotinyl-L-lysyl-[protein] + acetyl-CoA = N(6)-biotinyl-L-lysyl-[protein] + malonyl-CoA. It participates in lipid metabolism; malonyl-CoA biosynthesis; malonyl-CoA from acetyl-CoA: step 1/1. Functionally, component of the acetyl coenzyme A carboxylase (ACC) complex. First, biotin carboxylase catalyzes the carboxylation of biotin on its carrier protein (BCCP) and then the CO(2) group is transferred by the carboxyltransferase to acetyl-CoA to form malonyl-CoA. In Marinobacter nauticus (strain ATCC 700491 / DSM 11845 / VT8) (Marinobacter aquaeolei), this protein is Acetyl-coenzyme A carboxylase carboxyl transferase subunit alpha.